The chain runs to 166 residues: Monothiol glutaredoxin-3 (166 aa).

A Glutaredoxin domain is found at 56-159 (DSTDFEVFLE…STLDEWTHNK (104 aa)). Residue cysteine 76 participates in [2Fe-2S] cluster binding.

The protein belongs to the glutaredoxin family. Monothiol subfamily. As to quaternary structure, homodimer.

It localises to the nucleus. In terms of biological role, monothiol glutaredoxin involved in the biogenesis of iron-sulfur clusters. Binds one iron-sulfur cluster per dimer. The iron-sulfur cluster is bound between subunits, and is complexed by a bound glutathione and a cysteine residue from each subunit. In Schizosaccharomyces pombe (strain 972 / ATCC 24843) (Fission yeast), this protein is Monothiol glutaredoxin-3 (grx3).